Reading from the N-terminus, the 116-residue chain is Peptidyl-tRNA hydrolase (116 aa).

It belongs to the PTH2 family.

Its subcellular location is the cytoplasm. It catalyses the reaction an N-acyl-L-alpha-aminoacyl-tRNA + H2O = an N-acyl-L-amino acid + a tRNA + H(+). Functionally, the natural substrate for this enzyme may be peptidyl-tRNAs which drop off the ribosome during protein synthesis. The polypeptide is Peptidyl-tRNA hydrolase (Methanococcus vannielii (strain ATCC 35089 / DSM 1224 / JCM 13029 / OCM 148 / SB)).